Consider the following 101-residue polypeptide: UPF0235 protein Cpha266_2081 (101 aa).

Belongs to the UPF0235 family.

The protein is UPF0235 protein Cpha266_2081 of Chlorobium phaeobacteroides (strain DSM 266 / SMG 266 / 2430).